The primary structure comprises 170 residues: Zinc finger protein 576 (170 aa).

The segment at Met1 to Cys29 is disordered. Positions Glu8–Ser20 are enriched in basic and acidic residues. 4 consecutive C2H2-type zinc fingers follow at residues Pro34 to His57, Phe71 to His93, Phe112 to His134, and Phe143 to His165.

The protein belongs to the krueppel C2H2-type zinc-finger protein family.

It localises to the nucleus. In terms of biological role, may be involved in transcriptional regulation. In Homo sapiens (Human), this protein is Zinc finger protein 576 (ZNF576).